The primary structure comprises 289 residues: Acetyl-coenzyme A carboxylase carboxyl transferase subunit beta (289 aa).

Residues 30–289 form the CoA carboxyltransferase N-terminal domain; it reads IWRECPRCHS…SNAWRANHDK (260 aa). The Zn(2+) site is built by C34, C37, C52, and C55. The segment at 34–55 adopts a C4-type zinc-finger fold; that stretch reads CPRCHSRFYYRRFGNFDVCPEC.

Belongs to the AccD/PCCB family. As to quaternary structure, acetyl-CoA carboxylase is a heterohexamer composed of biotin carboxyl carrier protein (AccB), biotin carboxylase (AccC) and two subunits each of ACCase subunit alpha (AccA) and ACCase subunit beta (AccD). Zn(2+) serves as cofactor.

Its subcellular location is the cytoplasm. It carries out the reaction N(6)-carboxybiotinyl-L-lysyl-[protein] + acetyl-CoA = N(6)-biotinyl-L-lysyl-[protein] + malonyl-CoA. It participates in lipid metabolism; malonyl-CoA biosynthesis; malonyl-CoA from acetyl-CoA: step 1/1. Component of the acetyl coenzyme A carboxylase (ACC) complex. Biotin carboxylase (BC) catalyzes the carboxylation of biotin on its carrier protein (BCCP) and then the CO(2) group is transferred by the transcarboxylase to acetyl-CoA to form malonyl-CoA. This Oenococcus oeni (strain ATCC BAA-331 / PSU-1) protein is Acetyl-coenzyme A carboxylase carboxyl transferase subunit beta.